A 264-amino-acid polypeptide reads, in one-letter code: Iodotyrosine deiodinase (264 aa).

FMN contacts are provided by residues 75 to 79 (RRTVR) and 103 to 104 (SG). The 3-iodo-L-tyrosine site is built by Ala-105, Glu-132, Tyr-136, and Lys-157. Residues 212 to 214 (TST) and Arg-254 each bind FMN.

It belongs to the nitroreductase family. It depends on FMN as a cofactor.

It catalyses the reaction 2 iodide + L-tyrosine + 2 NADP(+) = 3,5-diiodo-L-tyrosine + 2 NADPH + H(+). The enzyme catalyses iodide + L-tyrosine + NADP(+) = 3-iodo-L-tyrosine + NADPH. The catalysed reaction is 3-iodo-L-tyrosine + iodide + NADP(+) = 3,5-diiodo-L-tyrosine + NADPH + H(+). It carries out the reaction L-tyrosine + chloride + NADP(+) = 3-chloro-L-tyrosine + NADPH. It catalyses the reaction bromide + L-tyrosine + NADP(+) = 3-bromo-L-tyrosine + NADPH. Catalyzes the dehalogenation of halotyrosines such as 3,5-diiodo-L-tyrosine. Likely to also catalyze the dehalogenation of other halotyrosines such as 3-bromo-L-tyrosine, 3-chloro-L-tyrosine and 3-iodo-L-tyrosine. The protein is Iodotyrosine deiodinase of Nematostella vectensis (Starlet sea anemone).